The chain runs to 312 residues: Olfactory receptor 1D2 (312 aa).

Over 1-25 the chain is Extracellular; it reads MDGGNQSEGSEFLLLGMSESPEQQR. N5 is a glycosylation site (N-linked (GlcNAc...) asparagine). The helical transmembrane segment at 26 to 49 threads the bilayer; that stretch reads ILFWMFLSMYLVTVVGNVLIILAI. At 50–57 the chain is on the cytoplasmic side; that stretch reads SSDSRLHT. A helical membrane pass occupies residues 58 to 79; the sequence is PVYFFLANLSFTDLFFVTNTIP. The Extracellular portion of the chain corresponds to 80-100; it reads KMLVNLQSHNKAISYAGCLTQ. C97 and C189 are oxidised to a cystine. A helical membrane pass occupies residues 101–120; sequence LYFLVSLVALDNLILAVMAY. The Cytoplasmic segment spans residues 121–139; sequence DRYVAICCPLHYTTAMSPK. A helical transmembrane segment spans residues 140 to 158; the sequence is LCILLLSLCWVLSVLYGLI. The Extracellular segment spans residues 159–196; it reads HTLLMTRVTFCGSRKIHYIFCEMYVLLRMACSNIQINH. Residue N195 is glycosylated (N-linked (GlcNAc...) asparagine). A helical membrane pass occupies residues 197-219; it reads TVLIATGCFIFLIPFGFVIISYV. The Cytoplasmic segment spans residues 220 to 236; that stretch reads LIIRAILRIPSVSKKYK. A helical transmembrane segment spans residues 237 to 259; sequence AFSTCASHLGAVSLFYGTLCMVY. The Extracellular portion of the chain corresponds to 260–271; the sequence is LKPLHTYSVKDS. Residues 272–291 form a helical membrane-spanning segment; the sequence is VATVMYAVVTPMMNPFIYSL. The Cytoplasmic portion of the chain corresponds to 292 to 312; the sequence is RNKDMHGALGRLLDKHFKRLT.

The protein belongs to the G-protein coupled receptor 1 family. In terms of tissue distribution, expressed in testis. Expressed in spermatozoa (at protein level). Expressed in olfactory epithelium.

Its subcellular location is the cell membrane. In terms of biological role, odorant receptor which may be involved in sperm chemotaxis. Bourgeonal is a strong chemoattractant for sperm in vitro and is shown to be a strong agonist for OR1D2 in vitro. May also function in olfactory reception. In Homo sapiens (Human), this protein is Olfactory receptor 1D2 (OR1D2).